Consider the following 193-residue polypeptide: uncharacterized protein (193 aa).

The first 22 residues, 1 to 22 (MAVQKNVIKGILAGTFALMLSG), serve as a signal peptide directing secretion. A lipid anchor (N-palmitoyl cysteine) is attached at Cys-23. Cys-23 carries the S-diacylglycerol cysteine lipid modification.

It localises to the cell membrane. This is an uncharacterized protein from Escherichia coli (strain K12).